Reading from the N-terminus, the 444-residue chain is Xaa-Pro dipeptidase (444 aa).

Residues D247, D258, H340, E385, and E424 each contribute to the Mn(2+) site.

Belongs to the peptidase M24B family. Bacterial-type prolidase subfamily. It depends on Mn(2+) as a cofactor.

The catalysed reaction is Xaa-L-Pro dipeptide + H2O = an L-alpha-amino acid + L-proline. In terms of biological role, splits dipeptides with a prolyl residue in the C-terminal position. The polypeptide is Xaa-Pro dipeptidase (Proteus mirabilis (strain HI4320)).